The sequence spans 320 residues: Beta-ketoacyl-[acyl-carrier-protein] synthase III (320 aa).

Active-site residues include C114 and H247. The tract at residues Q248–R252 is ACP-binding. Residue N277 is part of the active site.

The protein belongs to the thiolase-like superfamily. FabH family. Homodimer.

The protein localises to the cytoplasm. The catalysed reaction is malonyl-[ACP] + acetyl-CoA + H(+) = 3-oxobutanoyl-[ACP] + CO2 + CoA. Its pathway is lipid metabolism; fatty acid biosynthesis. Catalyzes the condensation reaction of fatty acid synthesis by the addition to an acyl acceptor of two carbons from malonyl-ACP. Catalyzes the first condensation reaction which initiates fatty acid synthesis and may therefore play a role in governing the total rate of fatty acid production. Possesses both acetoacetyl-ACP synthase and acetyl transacylase activities. Its substrate specificity determines the biosynthesis of branched-chain and/or straight-chain of fatty acids. The protein is Beta-ketoacyl-[acyl-carrier-protein] synthase III of Neisseria gonorrhoeae (strain ATCC 700825 / FA 1090).